The primary structure comprises 571 residues: Optineurin (571 aa).

Disordered regions lie at residues 1 to 32 (MSHQPLSCLTEKGDSPSESTGNGPPHLAHPNL) and 100 to 144 (LSHE…DQLR). Positions 38–170 (EELLQQMKEL…VSELQLKLNS (133 aa)) form a coiled coil. An interaction with Rab8 region spans residues 58–209 (MKLNNQAMKG…GPTRTVSIGT (152 aa)). Residues 100–143 (LSHENEKLKEELGKLKGKSERSSEDPTDDSRLPRAEAEQEKDQL) show a composition bias toward basic and acidic residues. Residues 176–181 (DSFVEI) carry the LIR motif. Ser-177 is subject to Phosphoserine; by TBK1. Basic and acidic residues predominate over residues 186-197 (GEAEGSVKEIKH). 2 disordered regions span residues 186-210 (GEAEGSVKEIKHSPGPTRTVSIGTS) and 255-291 (VSDFEKKASNRSEIETQTEGSTEKENEEEKGPETVGS). Ser-198 bears the Phosphoserine mark. The segment covering 201-210 (PTRTVSIGTS) has biased composition (polar residues). Positions 233–502 (CLREGNQKVE…LLKENDAFED (270 aa)) form a coiled coil. Basic and acidic residues-rich tracts occupy residues 255–268 (VSDFEKKASNRSEI) and 275–286 (STEKENEEEKGP). Ser-336 carries the post-translational modification Phosphoserine. An interaction with HD region spans residues 405–571 (TRKESEKVDR…LQIHVMDCII (167 aa)). The interval 406–514 (RKESEKVDRA…RQSLMEMQSR (109 aa)) is interaction with MYO6. The short motif at 468–473 (DFHAER) is the UBAN element. A Phosphoserine modification is found at Ser-520. Residues 541 to 571 (QRNIPIHSCPKCGEVLPDIDTLQIHVMDCII) form a CCHC NOA-type zinc finger. Cys-549, Cys-552, His-565, and Cys-569 together coordinate Zn(2+).

As to quaternary structure, self-associates. Interacts with HD. Interacts with GTF3A. Interacts with MYO6. Interacts (via UBAN) with ubiquitinated TFRC. Interacts with GTP-bound Rab8 (RAB8A and/or RAB8B). Interacts with TBC1D17. Interacts with TBK1. Interacts with TRAF3. Binds to linear ubiquitin chains. Interacts with LC3 family members MAP1LC3A, MAP1LC3B, GABARAP, GABARAPL1 and GABARAPL2; OPTN phosphorylation increases the association (at least with MAP1LC3B). Interacts with RAB12; the interaction may be indirect. Interacts with TBK1; this interaction leads to the Golgi localization of TBK1 and its subsequent activation. Interacts with palmitoyltransferase ZDHHC17/HIP14; the interaction does not lead to palmitoylation of OPTN. Interacts with CYLD. Interacts with TOM1; the interaction is indirect and is mediated by MYO6, which acts as a bridge between TOM1 and OPTN. Interacts with USP12; the interaction is independent of USP12 deubiquitinase activity and may be involved in regulation of autophagic flux. In terms of processing, phosphorylated by TBK1, leading to restrict bacterial proliferation in case of infection. Present in aqueous humor of the eye (at protein level).

It is found in the cytoplasm. The protein resides in the perinuclear region. Its subcellular location is the golgi apparatus. The protein localises to the trans-Golgi network. It localises to the cytoplasmic vesicle. It is found in the autophagosome. The protein resides in the recycling endosome. Functionally, plays an important role in the maintenance of the Golgi complex, in membrane trafficking, in exocytosis, through its interaction with myosin VI and Rab8. Links myosin VI to the Golgi complex and plays an important role in Golgi ribbon formation. Negatively regulates the induction of IFNB in response to RNA virus infection. Plays a neuroprotective role in the eye and optic nerve. Probably part of the TNF-alpha signaling pathway that can shift the equilibrium toward induction of cell death. May act by regulating membrane trafficking and cellular morphogenesis via a complex that contains Rab8 and huntingtin (HD). Mediates the interaction of Rab8 with the probable GTPase-activating protein TBC1D17 during Rab8-mediated endocytic trafficking, such as that of transferrin receptor (TFRC/TfR); regulates Rab8 recruitment to tubules emanating from the endocytic recycling compartment. Autophagy receptor that interacts directly with both the cargo to become degraded and an autophagy modifier of the MAP1 LC3 family; targets ubiquitin-coated bacteria (xenophagy) and appears to function in the same pathway as SQSTM1 and CALCOCO2/NDP52. The polypeptide is Optineurin (OPTN) (Macaca mulatta (Rhesus macaque)).